The sequence spans 148 residues: Holo-[acyl-carrier-protein] synthase (148 aa).

Mg(2+) contacts are provided by Asp-8 and Glu-57.

It belongs to the P-Pant transferase superfamily. AcpS family. Mg(2+) is required as a cofactor.

The protein localises to the cytoplasm. The enzyme catalyses apo-[ACP] + CoA = holo-[ACP] + adenosine 3',5'-bisphosphate + H(+). Functionally, transfers the 4'-phosphopantetheine moiety from coenzyme A to a Ser of acyl-carrier-protein. The chain is Holo-[acyl-carrier-protein] synthase from Ruegeria pomeroyi (strain ATCC 700808 / DSM 15171 / DSS-3) (Silicibacter pomeroyi).